The primary structure comprises 69 residues: Putative membrane protein insertion efficiency factor (69 aa).

It belongs to the UPF0161 family.

It is found in the cell membrane. Functionally, could be involved in insertion of integral membrane proteins into the membrane. The chain is Putative membrane protein insertion efficiency factor from Clostridium botulinum (strain Kyoto / Type A2).